Here is a 225-residue protein sequence, read N- to C-terminus: LysM and putative peptidoglycan-binding domain-containing protein 1 (225 aa).

A phosphoserine mark is found at S23 and S33. A LysM domain is found at 40-84; it reads LEHQLAPGDTLAGLALKYGVTMEQIKRANRLYTNDSIFLKKTLHI. A disordered region spans residues 97–153; sequence LDSEEEKDGEEAVQPSKDEVRPHSAERKKRERGLGHANGEPLPTAGQEPARHDLSAS. The segment covering 98–107 has biased composition (acidic residues); the sequence is DSEEEKDGEE. A Phosphoserine modification is found at S99. Over residues 112 to 121 the composition is skewed to basic and acidic residues; sequence SKDEVRPHSA. Residues S164, S179, S192, and S210 each carry the phosphoserine modification. A disordered region spans residues 170-225; the sequence is AAQKLKKGESGIPGEDSSLHLSSPRMQQRAVLGPVPLTQTSRTRTLRDQEDEIFKL. The segment covering 214 to 225 has biased composition (basic and acidic residues); the sequence is TLRDQEDEIFKL.

In Bos taurus (Bovine), this protein is LysM and putative peptidoglycan-binding domain-containing protein 1 (LYSMD1).